Reading from the N-terminus, the 178-residue chain is ATP-dependent protease subunit HslV (178 aa).

Residue threonine 8 is part of the active site. Residues glycine 163, cysteine 166, and threonine 169 each contribute to the Na(+) site.

The protein belongs to the peptidase T1B family. HslV subfamily. A double ring-shaped homohexamer of HslV is capped on each side by a ring-shaped HslU homohexamer. The assembly of the HslU/HslV complex is dependent on binding of ATP.

It localises to the cytoplasm. It carries out the reaction ATP-dependent cleavage of peptide bonds with broad specificity.. Its activity is regulated as follows. Allosterically activated by HslU binding. Its function is as follows. Protease subunit of a proteasome-like degradation complex believed to be a general protein degrading machinery. This is ATP-dependent protease subunit HslV from Xylella fastidiosa (strain 9a5c).